The primary structure comprises 373 residues: Quinolinate synthase (373 aa).

Residues H46 and S63 each contribute to the iminosuccinate site. [4Fe-4S] cluster is bound at residue C109. Residues 142 to 144 and S163 contribute to the iminosuccinate site; that span reads YMN. C232 contacts [4Fe-4S] cluster. Iminosuccinate is bound by residues 258–260 and T275; that span reads HPE. C324 is a binding site for [4Fe-4S] cluster.

The protein belongs to the quinolinate synthase family. Type 3 subfamily. [4Fe-4S] cluster is required as a cofactor.

Its subcellular location is the cytoplasm. The enzyme catalyses iminosuccinate + dihydroxyacetone phosphate = quinolinate + phosphate + 2 H2O + H(+). It functions in the pathway cofactor biosynthesis; NAD(+) biosynthesis; quinolinate from iminoaspartate: step 1/1. In terms of biological role, catalyzes the condensation of iminoaspartate with dihydroxyacetone phosphate to form quinolinate. The chain is Quinolinate synthase from Acidobacterium capsulatum (strain ATCC 51196 / DSM 11244 / BCRC 80197 / JCM 7670 / NBRC 15755 / NCIMB 13165 / 161).